The sequence spans 590 residues: Beta-fructofuranosidase, insoluble isoenzyme CWINV2 (590 aa).

The first 25 residues, 1–25, serve as a signal peptide directing secretion; it reads MSAPKFGYVLLLIVLINISNNGVDA. Substrate is bound by residues 59–62, Gln78, and Trp86; that span reads WIND. Asp62 is an active-site residue. A glycan (N-linked (GlcNAc...) asparagine) is linked at Asn118. Substrate is bound at residue 121-122; the sequence is WS. 2 N-linked (GlcNAc...) asparagine glycosylation sites follow: Asn143 and Asn180. Residues 185-186, Glu241, and Asp275 each bind substrate; that span reads RD. N-linked (GlcNAc...) asparagine glycosylation occurs at Asn335. The cysteines at positions 435 and 483 are disulfide-linked. A glycan (N-linked (GlcNAc...) asparagine) is linked at Asn564.

This sequence belongs to the glycosyl hydrolase 32 family. In terms of tissue distribution, expressed in flowers, and seeds.

It is found in the secreted. It localises to the extracellular space. The protein resides in the apoplast. Its subcellular location is the cell wall. The catalysed reaction is Hydrolysis of terminal non-reducing beta-D-fructofuranoside residues in beta-D-fructofuranosides.. This Arabidopsis thaliana (Mouse-ear cress) protein is Beta-fructofuranosidase, insoluble isoenzyme CWINV2 (CWINV2).